We begin with the raw amino-acid sequence, 371 residues long: Cytochrome b (371 aa).

4 consecutive transmembrane segments (helical) span residues 25-45, 69-90, 105-125, and 170-190; these read FGSM…FLAI, WTMQ…YIHI, WLSG…GYVL, and FFAL…AHIM. Residues H75 and H89 each contribute to the heme b site. Heme b-binding residues include H174 and H188. H193 serves as a coordination point for a ubiquinone. Transmembrane regions (helical) follow at residues 218-238, 280-300, 312-332, and 339-358; these read NKDM…LSFL, LGGT…PFTH, MTQT…WTAT, and FMFI…FMNP.

It belongs to the cytochrome b family. The cytochrome bc1 complex contains 3 respiratory subunits (MT-CYB, CYC1 and UQCRFS1), 2 core proteins (UQCRC1 and UQCRC2) and probably 6 low-molecular weight proteins. Heme b serves as cofactor.

It localises to the mitochondrion inner membrane. Functionally, component of the ubiquinol-cytochrome c reductase complex (complex III or cytochrome b-c1 complex) that is part of the mitochondrial respiratory chain. The b-c1 complex mediates electron transfer from ubiquinol to cytochrome c. Contributes to the generation of a proton gradient across the mitochondrial membrane that is then used for ATP synthesis. The chain is Cytochrome b (MT-CYB) from Elapsoidea nigra (Usambara garter snake).